Reading from the N-terminus, the 581-residue chain is Alpha-amylase 2 (581 aa).

The signal sequence occupies residues 1 to 24 (MNYRRNICLRIGWMLLFAFIPAYA). Cysteines 56 and 64 form a disulfide. A substrate-binding site is contributed by Trp109. Asn147 is a Ca(2+) binding site. Cysteines 176 and 191 form a disulfide. Asp202 lines the Ca(2+) pocket. Residue Arg231 participates in substrate binding. Asp233, His237, and Glu257 together coordinate Ca(2+). Asp233 serves as the catalytic Nucleophile. 236–237 (KH) contributes to the substrate binding site. The Proton donor role is filled by Glu257. Gly261 is a binding site for substrate. A disulfide bond links Cys267 and Cys311. Asn291 carries an N-linked (GlcNAc...) asparagine glycan. Substrate is bound at residue Asp325. Asn332 is a glycosylation site (N-linked (GlcNAc...) asparagine). Residue Arg372 coordinates substrate. Ser551 is lipidated: GPI-anchor amidated serine. Positions 552-581 (EAKTIRSFTKLKLFILLIAVPFALPMIILI) are cleaved as a propeptide — removed in mature form.

The protein belongs to the glycosyl hydrolase 13 family. It depends on Ca(2+) as a cofactor.

The protein resides in the cell membrane. It catalyses the reaction Endohydrolysis of (1-&gt;4)-alpha-D-glucosidic linkages in polysaccharides containing three or more (1-&gt;4)-alpha-linked D-glucose units.. This Schizosaccharomyces pombe (strain 972 / ATCC 24843) (Fission yeast) protein is Alpha-amylase 2 (aah2).